A 320-amino-acid chain; its full sequence is Malate dehydrogenase (320 aa).

Residues 8–13 (GAGQIG) and Asp33 each bind NAD(+). Arg82 and Arg88 together coordinate substrate. NAD(+) contacts are provided by residues Asn95 and 118 to 120 (ITN). Substrate is bound by residues Asn120 and Arg151. The active-site Proton acceptor is His175.

This sequence belongs to the LDH/MDH superfamily. MDH type 3 family.

It carries out the reaction (S)-malate + NAD(+) = oxaloacetate + NADH + H(+). In terms of biological role, catalyzes the reversible oxidation of malate to oxaloacetate. The chain is Malate dehydrogenase from Pelagibacter ubique (strain HTCC1062).